Here is a 316-residue protein sequence, read N- to C-terminus: Apolipoprotein E (316 aa).

A signal peptide spans Met-1–Ala-18. 8 consecutive repeat copies span residues Val-79 to Ala-100, Pro-101 to Gly-122, Ser-123 to Gly-144, Gln-145 to Leu-166, Arg-167 to Glu-188, Arg-189 to Ala-210, Thr-211 to His-232, and Gly-233 to Glu-254. The interval Val-79 to Glu-254 is 8 X 22 AA approximate tandem repeats. Met-142 carries the methionine sulfoxide modification. Ser-146 is modified (phosphoserine). Residues His-157–Arg-167 are LDL and other lipoprotein receptors binding. Leu-161 to Arg-164 contributes to the heparin binding site. Positions Ala-209–Met-289 are lipid-binding and lipoprotein association. Thr-211 carries an O-linked (GalNAc...) threonine glycan. Arg-228–Leu-235 provides a ligand contact to heparin. A homooligomerization region spans residues Ser-265 to His-316. A specificity for association with VLDL region spans residues Arg-277 to Met-289.

Belongs to the apolipoprotein A1/A4/E family. In terms of assembly, homotetramer. May interact with ABCA1; functionally associated with ABCA1 in the biogenesis of HDLs. May interact with APP/A4 amyloid-beta peptide; the interaction is extremely stable in vitro but its physiological significance is unclear. May interact with MAPT. May interact with MAP2. In the cerebrospinal fluid, interacts with secreted SORL1. Interacts with PMEL; this allows the loading of PMEL luminal fragment on ILVs to induce fibril nucleation. Post-translationally, APOE exists as multiple glycosylated and sialylated glycoforms within cells and in plasma. The extent of glycosylation and sialylation are tissue and context specific. In terms of processing, glycated in plasma VLDL. Phosphorylated by FAM20C in the extracellular medium.

The protein localises to the secreted. It localises to the extracellular space. The protein resides in the extracellular matrix. It is found in the extracellular vesicle. Its subcellular location is the endosome. The protein localises to the multivesicular body. APOE is an apolipoprotein, a protein associating with lipid particles, that mainly functions in lipoprotein-mediated lipid transport between organs via the plasma and interstitial fluids. APOE is a core component of plasma lipoproteins and is involved in their production, conversion and clearance. Apolipoproteins are amphipathic molecules that interact both with lipids of the lipoprotein particle core and the aqueous environment of the plasma. As such, APOE associates with chylomicrons, chylomicron remnants, very low density lipoproteins (VLDL) and intermediate density lipoproteins (IDL) but shows a preferential binding to high-density lipoproteins (HDL). It also binds a wide range of cellular receptors including the LDL receptor/LDLR and the very low-density lipoprotein receptor/VLDLR that mediate the cellular uptake of the APOE-containing lipoprotein particles. Finally, APOE also has a heparin-binding activity and binds heparan-sulfate proteoglycans on the surface of cells, a property that supports the capture and the receptor-mediated uptake of APOE-containing lipoproteins by cells. The sequence is that of Apolipoprotein E (APOE) from Capra hircus aegagrus (Wild goat).